The following is a 474-amino-acid chain: MKNNEIDTIAAISTPIGRGGIGIIRVSGKLVPEVAMKLFNKIPKPRTAEYLTCIDHNGSIMEKVITLFFPEPHSFTGENILEIHGHGGQMILDLLLDRILNISSRIRLANPGEFTERAFLNEKIDLIQAESIADIINATSYQAAKSACNSLQGHFSNQIRIILNKITNFRTYIESTLDFSDQEISDISYQHIYNTLQNIIDNTNQICKLTHSGVLLRDGIKVVIAGKPNAGKSSLFNSLINKDRAIISNISGTTRDILHEYIQLNGIAFHIIDTAGFKKNSTNEIELIGMQKSKYELSKADHILWVIDSTDYSHNNSYNNIINSLKKELSSNNIEAVFITIIRNKSDLSFEHNGIDTTNKYACITLSALLNHGIDLLKKHLYDSAMLQIHKNSNFSSVEENQGNFIARKRHLKILQKVFQYLLSAKTQLQYNMTVNDCFAEDLKKAHEELAQIFGKLTPDDLLEEIFRAFCIGK.

Arginine 25, glutamate 82, and lysine 123 together coordinate (6S)-5-formyl-5,6,7,8-tetrahydrofolate. The TrmE-type G domain occupies 219 to 386 (GIKVVIAGKP…LKKHLYDSAM (168 aa)). Asparagine 229 contacts K(+). GTP-binding positions include 229–234 (NAGKSS), 248–254 (SNISGTT), and 273–276 (DTAG). Serine 233 lines the Mg(2+) pocket. K(+) is bound by residues serine 248, isoleucine 250, and threonine 253. Mg(2+) is bound at residue threonine 254. Lysine 474 contributes to the (6S)-5-formyl-5,6,7,8-tetrahydrofolate binding site.

This sequence belongs to the TRAFAC class TrmE-Era-EngA-EngB-Septin-like GTPase superfamily. TrmE GTPase family. In terms of assembly, homodimer. Heterotetramer of two MnmE and two MnmG subunits. The cofactor is K(+).

The protein localises to the cytoplasm. Its function is as follows. Exhibits a very high intrinsic GTPase hydrolysis rate. Involved in the addition of a carboxymethylaminomethyl (cmnm) group at the wobble position (U34) of certain tRNAs, forming tRNA-cmnm(5)s(2)U34. The sequence is that of tRNA modification GTPase MnmE from Blochmanniella floridana.